We begin with the raw amino-acid sequence, 228 residues long: Urease accessory protein UreF (228 aa).

This sequence belongs to the UreF family. UreD, UreF and UreG form a complex that acts as a GTP-hydrolysis-dependent molecular chaperone, activating the urease apoprotein by helping to assemble the nickel containing metallocenter of UreC. The UreE protein probably delivers the nickel.

It is found in the cytoplasm. Its function is as follows. Required for maturation of urease via the functional incorporation of the urease nickel metallocenter. The sequence is that of Urease accessory protein UreF from Prochlorococcus marinus subsp. pastoris (strain CCMP1986 / NIES-2087 / MED4).